The chain runs to 640 residues: Isoniazid-induced protein IniA (640 aa).

Residues 497–519 (IGMLSSVVGLGLFNPLSVGAGLI) traverse the membrane as a helical segment. The stretch at 560–628 (RDRLKMIQRL…QVNDNLAGLE (69 aa)) forms a coiled coil.

Forms multimeric structures containing a central pore.

The protein resides in the cell membrane. Functionally, participates in the development of tolerance to both isoniazid and ethambutol. May function through a MDR-pump like mechanism, although it does not appear to directly transport isoniazid from the cell. The chain is Isoniazid-induced protein IniA (iniA) from Mycobacterium tuberculosis (strain CDC 1551 / Oshkosh).